The chain runs to 782 residues: Lysosome membrane protein 2-C (782 aa).

Residues 1 to 7 (MVANNKG) are Cytoplasmic-facing. A helical membrane pass occupies residues 8 to 28 (LLIAGLLLSVIGAALFVISLA). The Lumenal segment spans residues 29-739 (LLPSVLNVAT…QQFKQIQTVK (711 aa)). N-linked (GlcNAc...) asparagine glycosylation is found at Asn77, Asn105, Asn191, Asn219, Asn234, Asn243, Asn281, Asn368, Asn387, Asn401, Asn427, Asn432, Asn451, Asn465, Asn501, Asn536, Asn540, Asn595, Asn605, Asn613, Asn646, and Asn692. The helical transmembrane segment at 740-760 (IAPVVVVSIFGGILLIAGLVM) threads the bilayer. Residues 761-782 (AINGFRKTFYNNNQYNGYNIIN) lie on the Cytoplasmic side of the membrane. Positions 777–781 (GYNII) match the Tyrosine-type lysosomal sorting signal motif.

This sequence belongs to the CD36 family. In terms of processing, heavily glycosylated.

It localises to the lysosome membrane. May act as a lysosomal receptor. May be involved role in macropinocytosis and fluid phase exocytosis. In Dictyostelium discoideum (Social amoeba), this protein is Lysosome membrane protein 2-C (lmpC).